Reading from the N-terminus, the 1380-residue chain is Respiration factor 2 (1380 aa).

2 consecutive C2H2-type zinc fingers follow at residues 151-173 (FLCP…QHSH) and 179-202 (YLCI…QKLH). The interval 208–231 (TGDPRRMTPAPNSTSSFASKRRHS) is disordered. Residues S231 and S322 each carry the phosphoserine modification. 4 disordered regions span residues 413-445 (NLNL…NSNN), 544-584 (SPKN…NIDP), 624-643 (SRSS…SLNH), and 652-688 (LNLS…KRRR). Over residues 424–445 (QQQQQQQQQQNSTSSTIVNSNN) the composition is skewed to low complexity. At S544 the chain carries Phosphoserine. Residues 544-569 (SPKNPPTTVSDSSSTINFNPGTNNLL) are compositionally biased toward polar residues. The segment covering 575-584 (PNDKDSNIDP) has biased composition (basic and acidic residues). A compositionally biased stretch (low complexity) spans 624 to 634 (SRSSIPNKSPP). S632 carries the post-translational modification Phosphoserine. A compositionally biased stretch (polar residues) spans 652–681 (LNLSLNGSTDLPSTPQNQLKEPSYSDPISH).

It belongs to the RSF2/TDA9 family.

It localises to the nucleus. Functionally, transcription factor that regulates expression of both nuclear and mitochondrial genes, and more specifically those required for glycerol-based growth and respiration. The sequence is that of Respiration factor 2 (RSF2) from Saccharomyces cerevisiae (strain ATCC 204508 / S288c) (Baker's yeast).